The following is a 415-amino-acid chain: MFS-type transporter FVEG_12626 (415 aa).

Over residues 1–18 (MDPDTEQMRVEKPNHEQP) the composition is skewed to basic and acidic residues. Positions 1–22 (MDPDTEQMRVEKPNHEQPKPNT) are disordered. A run of 6 helical transmembrane segments spans residues 27 to 47 (GGFK…VGVF), 63 to 83 (TVSW…PFVG), 93 to 113 (YLLL…SISS), 118 to 138 (YILS…YPSF), 151 to 171 (LALG…PIVV), and 178 to 198 (IGFG…LLVT). Asn-199 carries N-linked (GlcNAc...) asparagine glycosylation. A run of 6 helical transmembrane segments spans residues 227–247 (FILT…PITF), 264–284 (YLVS…GYIA), 290–310 (FNVS…LWLP), 318–338 (IAFA…SPAL), 354–374 (TMYA…GALI), and 386–406 (VFAG…RLYI).

This sequence belongs to the major facilitator superfamily. Monocarboxylate porter (TC 2.A.1.13) family.

The protein resides in the membrane. Functionally, MFS-type transporter; part of the Fusarium detoxification of benzoxazolinone cluster 2 (FDB2) involved in the degradation of benzoxazolinones produced by the host plant. Maize, wheat, and rye produce the 2 benzoxazinone phytoanticipins 2,4-dihy-droxy-7-methoxy-1,4-benzoxazin-3-one (DIMBOA) and 2,4-dihydroxy-1,4-benzoxazin-3-one (DIBOA) that, due to their inherent instability once released, spontaneously degrade to the more stable corresponding benzoxazolinones, 6-methoxy-2-benzoxazolinone (MBOA) and 2-benzoxazolinone (BOA), respectively. The chain is MFS-type transporter FVEG_12626 from Gibberella moniliformis (strain M3125 / FGSC 7600) (Maize ear and stalk rot fungus).